Consider the following 146-residue polypeptide: Probable U6 snRNA-associated Sm-like protein LSm4 (146 aa).

Residues 2 to 75 (LPLSLLKTAQ…IKYLRVPDEV (74 aa)) form the Sm domain. Basic and acidic residues predominate over residues 80–91 (QEEAKSRTDRKP). A disordered region spans residues 80–146 (QEEAKSRTDR…GGRGGGRGRG (67 aa)). The segment covering 137–146 (GGRGGGRGRG) has biased composition (gly residues).

The protein belongs to the snRNP Sm proteins family. In terms of assembly, LSm subunits form a heteromer with a doughnut shape.

It localises to the nucleus. Functionally, binds specifically to the 3'-terminal U-tract of U6 snRNA. This chain is Probable U6 snRNA-associated Sm-like protein LSm4, found in Nicotiana tabacum (Common tobacco).